A 351-amino-acid chain; its full sequence is tRNA-specific 2-thiouridylase MnmA (351 aa).

ATP is bound by residues 7–14 (GLSGGVDS) and L33. The Nucleophile role is filled by C94. C94 and C193 are disulfide-bonded. G119 is an ATP binding site. Residues 143-145 (KDQ) are interaction with tRNA. The Cysteine persulfide intermediate role is filled by C193. Residues 298-299 (RY) form an interaction with tRNA region.

The protein belongs to the MnmA/TRMU family.

It is found in the cytoplasm. It carries out the reaction S-sulfanyl-L-cysteinyl-[protein] + uridine(34) in tRNA + AH2 + ATP = 2-thiouridine(34) in tRNA + L-cysteinyl-[protein] + A + AMP + diphosphate + H(+). Catalyzes the 2-thiolation of uridine at the wobble position (U34) of tRNA, leading to the formation of s(2)U34. The chain is tRNA-specific 2-thiouridylase MnmA from Nostoc punctiforme (strain ATCC 29133 / PCC 73102).